The chain runs to 376 residues: Cobalt-precorrin-5B C(1)-methyltransferase (376 aa).

The protein belongs to the CbiD family.

It carries out the reaction Co-precorrin-5B + S-adenosyl-L-methionine = Co-precorrin-6A + S-adenosyl-L-homocysteine. The protein operates within cofactor biosynthesis; adenosylcobalamin biosynthesis; cob(II)yrinate a,c-diamide from sirohydrochlorin (anaerobic route): step 6/10. Functionally, catalyzes the methylation of C-1 in cobalt-precorrin-5B to form cobalt-precorrin-6A. In Bradyrhizobium sp. (strain BTAi1 / ATCC BAA-1182), this protein is Cobalt-precorrin-5B C(1)-methyltransferase.